Consider the following 286-residue polypeptide: Acetyl-coenzyme A carboxylase carboxyl transferase subunit beta (286 aa).

The 264-residue stretch at 23 to 286 (IWVKCNNCNQ…ITNKPEPKKE (264 aa)) folds into the CoA carboxyltransferase N-terminal domain. Zn(2+) contacts are provided by cysteine 27, cysteine 30, cysteine 46, and cysteine 49. Residues 27–49 (CNNCNQMIYKIELEKNLEVCPKC) form a C4-type zinc finger.

It belongs to the AccD/PCCB family. Acetyl-CoA carboxylase is a heterohexamer composed of biotin carboxyl carrier protein (AccB), biotin carboxylase (AccC) and two subunits each of ACCase subunit alpha (AccA) and ACCase subunit beta (AccD). It depends on Zn(2+) as a cofactor.

The protein resides in the cytoplasm. The enzyme catalyses N(6)-carboxybiotinyl-L-lysyl-[protein] + acetyl-CoA = N(6)-biotinyl-L-lysyl-[protein] + malonyl-CoA. It functions in the pathway lipid metabolism; malonyl-CoA biosynthesis; malonyl-CoA from acetyl-CoA: step 1/1. Functionally, component of the acetyl coenzyme A carboxylase (ACC) complex. Biotin carboxylase (BC) catalyzes the carboxylation of biotin on its carrier protein (BCCP) and then the CO(2) group is transferred by the transcarboxylase to acetyl-CoA to form malonyl-CoA. This chain is Acetyl-coenzyme A carboxylase carboxyl transferase subunit beta, found in Wigglesworthia glossinidia brevipalpis.